The chain runs to 655 residues: MPRINFIFGIHNHQPLGNFGWVMEEAYEKAYRPFLEILEEYPNMKVAIHISGILVEWLEENKPDYIDLLKSLVRKGQVEIVVAGFYEPVLAAIPKEDRLEQIYLLKEWAKKIGYDAKGLWLTERVWQPELVKTLREAGIEYVVVDDYHFMSAGLSKDQLFWPYYTEDGGEVITVFPIDEKLRYLIPFRPVDKVISYLHSLASEDESKVAVFHDDGEKFGIWPMTYEWVYEKGWLREFFDRVSSDEAINIMLYSEYLQKFKPKGLVYLPIASYFEMSEWSLPAQQAKLFVEFVEKLKELNMFERYRVFVRGGIWKNFFYKYPEANYMHKRMLMLSRLLRDNPSARRFVLRAQCNDAYWHGVFGGIYLPHLRRAIWSNLIKAHSHLEPKNKILDVDFDGREEVFLENDNFIIVVKPHYGGSIFELSSKRRAVNYADVIARRWEHYHNLGESESDDNENQEGVSSIHEIGKRIPEDIRKELAYDRYRRGILQDHFFSANETLDRYRLAKYWELGDFIEGVYNYEVGNGLVLWRRGKVLNVTVDVKKSIEVREDGFSVRYTVLSEEDIEALFGIELNIAVHSIKESPEELIGKRIKVNDKYGVGEFEIVLNKKARIWKYPVKTLSQSEAGWDYIQQGVSYTIIYPINGRLDIELYFREL.

E123 functions as the Nucleophile in the catalytic mechanism. The active-site Proton donor is D214.

This sequence belongs to the glycosyl hydrolase 57 family.

It catalyses the reaction Endohydrolysis of (1-&gt;4)-alpha-D-glucosidic linkages in polysaccharides containing three or more (1-&gt;4)-alpha-linked D-glucose units.. This chain is Alpha-amylase (amyA), found in Pyrococcus abyssi (strain GE5 / Orsay).